We begin with the raw amino-acid sequence, 122 residues long: NADH-quinone oxidoreductase subunit A (122 aa).

3 consecutive transmembrane segments (helical) span residues 12 to 32 (IIIF…VNLI), 66 to 86 (LVAI…PWAI), and 91 to 111 (IGGL…VGFI).

Belongs to the complex I subunit 3 family. In terms of assembly, NDH-1 is composed of 14 different subunits. Subunits NuoA, H, J, K, L, M, N constitute the membrane sector of the complex.

Its subcellular location is the cell inner membrane. The enzyme catalyses a quinone + NADH + 5 H(+)(in) = a quinol + NAD(+) + 4 H(+)(out). NDH-1 shuttles electrons from NADH, via FMN and iron-sulfur (Fe-S) centers, to quinones in the respiratory chain. The immediate electron acceptor for the enzyme in this species is believed to be ubiquinone. Couples the redox reaction to proton translocation (for every two electrons transferred, four hydrogen ions are translocated across the cytoplasmic membrane), and thus conserves the redox energy in a proton gradient. This Pelagibacter ubique (strain HTCC1062) protein is NADH-quinone oxidoreductase subunit A.